Here is a 377-residue protein sequence, read N- to C-terminus: Nitric oxide reductase FlRd-NAD(+) reductase (377 aa).

This sequence belongs to the FAD-dependent oxidoreductase family. FAD is required as a cofactor.

It is found in the cytoplasm. It carries out the reaction 2 reduced [nitric oxide reductase rubredoxin domain] + NAD(+) + H(+) = 2 oxidized [nitric oxide reductase rubredoxin domain] + NADH. It functions in the pathway nitrogen metabolism; nitric oxide reduction. Its function is as follows. One of at least two accessory proteins for anaerobic nitric oxide (NO) reductase. Reduces the rubredoxin moiety of NO reductase. This Escherichia coli O7:K1 (strain IAI39 / ExPEC) protein is Nitric oxide reductase FlRd-NAD(+) reductase.